We begin with the raw amino-acid sequence, 105 residues long: Thioredoxin (105 aa).

A Thioredoxin domain is found at 2–105; sequence VKQIESKTAF…KLEATINELV (104 aa). Lys3 carries the N6-acetyllysine modification. At Lys8 the chain carries N6-succinyllysine. Catalysis depends on nucleophile residues Cys32 and Cys35. Cys32 and Cys35 are joined by a disulfide. At Lys39 the chain carries N6-acetyllysine. 2 positions are modified to S-nitrosocysteine: Cys62 and Cys69. An S-nitrosocysteine; alternate modification is found at Cys73. N6-acetyllysine; alternate is present on Lys94. Position 94 is an N6-succinyllysine; alternate (Lys94).

It belongs to the thioredoxin family. Homodimer; disulfide-linked. Interacts with TXNIP through the redox-active site. Interacts with MAP3K5 and CASP3. In case of infection, interacts with S.typhimurium protein slrP. Interacts with APEX1; the interaction stimulates the FOS/JUN AP-1 DNA-binding activity in a redox-dependent manner. In terms of processing, in the fully reduced protein, both Cys-69 and Cys-73 are nitrosylated in response to nitric oxide (NO). When two disulfide bonds are present in the protein, only Cys-73 is nitrosylated. Cys-73 can serve as donor for nitrosylation of target proteins. In case of infection, ubiquitinated by S.typhimurium protein slrP, leading to its degradation.

Its subcellular location is the nucleus. It is found in the cytoplasm. The protein resides in the secreted. In terms of biological role, participates in various redox reactions through the reversible oxidation of its active center dithiol to a disulfide and catalyzes dithiol-disulfide exchange reactions. Plays a role in the reversible S-nitrosylation of cysteine residues in target proteins, and thereby contributes to the response to intracellular nitric oxide. Nitrosylates the active site Cys of CASP3 in response to nitric oxide (NO), and thereby inhibits caspase-3 activity. Induces the FOS/JUN AP-1 DNA-binding activity in ionizing radiation (IR) cells through its oxidation/reduction status and stimulates AP-1 transcriptional activity. Its function is as follows. ADF augments the expression of the interleukin-2 receptor TAC (IL2R/P55). The sequence is that of Thioredoxin (TXN) from Homo sapiens (Human).